We begin with the raw amino-acid sequence, 258 residues long: Isoprenyl transferase (258 aa).

Asp-38 is an active-site residue. Mg(2+) is bound at residue Asp-38. Substrate-binding positions include Gly-39 to Arg-42, Trp-43, Arg-51, His-55, and Ser-83 to Glu-85. Residue Asn-86 is the Proton acceptor of the active site. Substrate-binding positions include Trp-87, Arg-89, Arg-206, and Arg-212–Ser-214. Residue Glu-225 coordinates Mg(2+).

The protein belongs to the UPP synthase family. As to quaternary structure, homodimer. It depends on Mg(2+) as a cofactor.

Functionally, catalyzes the condensation of isopentenyl diphosphate (IPP) with allylic pyrophosphates generating different type of terpenoids. The sequence is that of Isoprenyl transferase from Bacillus cereus (strain ATCC 10987 / NRS 248).